Consider the following 553-residue polypeptide: MNRQFTCKSGAANRGFSGCSAVLSGGSASSYRAGGKGLGGGFSSRSLYSLRSPRSISFNVASGSGRTGGYGFGRNRASGFAGSMFGGGALGPSNPSLCLPGGIHQVTVNKSLLAPLNVELDPEIQKVRAQEREQIKALNNKFASFIDKVRFLEQQNQVLQTKWELLQQLDLSNCRRNLEPVYEAHISSLQKQLDSLSGDRVRLDSELRGMRDAVEDCKKRYEEEINKRTTAENEFVVLKKDVDAAYMSKVELQAKVDALDGEIKFLKCLYEGEITQMQSHISDTSVVLSMDNNRNLDLDSIIAEVRAQYEDIALKSKAEAEMVYQTKFQELQLAAGRHGDDLKHTRNEISELTRLIQRLRSEIESVKKQCSNLETAIADAEQRGDCALKDAQAKLDDLERALHQAKEELARMLREHQELMSMKLALDIEIATYRKLLEGEECRMSGEHTNAVSISVISSSTTGAVGAGTSFGFSNPSTYGYRPSSVAGGYGILSGGCVTGSGNCSPRGDTKTRLGSASEFKEVSGKTLALGSPSKKTMRADRQSSISVQLWFS.

The interval 1–130 is head; it reads MNRQFTCKSG…DPEIQKVRAQ (130 aa). A coil 1A region spans residues 131 to 166; the sequence is EREQIKALNNKFASFIDKVRFLEQQNQVLQTKWELL. One can recognise an IF rod domain in the interval 131-444; it reads EREQIKALNN…KLLEGEECRM (314 aa). The linker 1 stretch occupies residues 167 to 185; it reads QQLDLSNCRRNLEPVYEAH. Positions 186–277 are coil 1B; the sequence is ISSLQKQLDS…CLYEGEITQM (92 aa). A linker 12 region spans residues 278–301; sequence QSHISDTSVVLSMDNNRNLDLDSI. Residues 302 to 440 form a coil 2 region; it reads IAEVRAQYED…ATYRKLLEGE (139 aa). Residues 441–539 are tail; the sequence is ECRMSGEHTN…LGSPSKKTMR (99 aa).

Belongs to the intermediate filament family. Heterotetramer of two type I and two type II keratins.

In terms of biological role, has a role in hair formation. Specific component of keratin intermediate filaments in the inner root sheath (IRS) of the hair follicle. This chain is Keratin, type II cytoskeletal 73 (Krt73), found in Rattus norvegicus (Rat).